Consider the following 265-residue polypeptide: MSQASSTDTPFVIAGRTYGSRLLVGTGKYKDLDETRRAIEASGAEIVTVAVRRTNIGQNPGEPNLLDVIPPDRYTILPNTAGCYDAVEAVRTCRLARELLDGHNLVKLEVLADQKTLFPNVVETLKAAEQLVKDGFDVMVYTSDDPIIARQLAEIGCIAVMPLAGLIGSGLGICNPYNLRIILEEAKVPVLVDAGVGTASDAAIAMELGCEAVLMNTAIAHARDPVMMAEAMKHAIVAGRLAYLAGRMPRKLYASASSPLDGLID.

Residue Lys-107 is the Schiff-base intermediate with DXP of the active site. 1-deoxy-D-xylulose 5-phosphate is bound by residues Gly-168, 194-195 (AG), and 216-217 (NT).

Belongs to the ThiG family. In terms of assembly, homotetramer. Forms heterodimers with either ThiH or ThiS.

The protein resides in the cytoplasm. It carries out the reaction [ThiS sulfur-carrier protein]-C-terminal-Gly-aminoethanethioate + 2-iminoacetate + 1-deoxy-D-xylulose 5-phosphate = [ThiS sulfur-carrier protein]-C-terminal Gly-Gly + 2-[(2R,5Z)-2-carboxy-4-methylthiazol-5(2H)-ylidene]ethyl phosphate + 2 H2O + H(+). Its pathway is cofactor biosynthesis; thiamine diphosphate biosynthesis. Catalyzes the rearrangement of 1-deoxy-D-xylulose 5-phosphate (DXP) to produce the thiazole phosphate moiety of thiamine. Sulfur is provided by the thiocarboxylate moiety of the carrier protein ThiS. In vitro, sulfur can be provided by H(2)S. This is Thiazole synthase from Pseudomonas paraeruginosa (strain DSM 24068 / PA7) (Pseudomonas aeruginosa (strain PA7)).